Consider the following 196-residue polypeptide: MERLEKQFFIIPTLQLATALLGKTFVRILPGNRVLKGRIVETEAYLGEGDEASHAWRGKTDRNAPMFEAPGTLYVYFVYGCHHLVNIVSEPRETAGAVLLRAMEPLEGQGFMERQRGTASASDLMSGPAKIAQALDINRSHSGSDLFSGEFFLENAPRIPENQIGTSSRIGISRGRELQWRKFVIGSPHLSQGQPS.

The protein belongs to the DNA glycosylase MPG family.

This chain is Putative 3-methyladenine DNA glycosylase, found in Chlorobium phaeovibrioides (strain DSM 265 / 1930) (Prosthecochloris vibrioformis (strain DSM 265)).